A 250-amino-acid chain; its full sequence is 5-oxoprolinase subunit A (250 aa).

This sequence belongs to the LamB/PxpA family. As to quaternary structure, forms a complex composed of PxpA, PxpB and PxpC.

It catalyses the reaction 5-oxo-L-proline + ATP + 2 H2O = L-glutamate + ADP + phosphate + H(+). Catalyzes the cleavage of 5-oxoproline to form L-glutamate coupled to the hydrolysis of ATP to ADP and inorganic phosphate. The sequence is that of 5-oxoprolinase subunit A from Streptomyces avermitilis (strain ATCC 31267 / DSM 46492 / JCM 5070 / NBRC 14893 / NCIMB 12804 / NRRL 8165 / MA-4680).